The following is a 116-amino-acid chain: C-C motif chemokine 6 (116 aa).

The signal sequence occupies residues 1–21 (MRNSKTAISFFILVAVLGSQA). 3 cysteine pairs are disulfide-bonded: Cys50–Cys73, Cys51–Cys89, and Cys60–Cys100.

It belongs to the intercrine beta (chemokine CC) family. Post-translationally, the N-terminal is proteolytically cleaved by proteases associated with inflammatory responses. The processed forms CL6(22-95) and CCL6(23-95) show increase in CCR1-mediated signaling and chemotaxis assays in vitro. As to expression, expressed in myelopoietic bone marrow cultures stimulated by GM-CSF.

The protein resides in the secreted. Functionally, chemotactic factor that attracts mostly macrophage, but it can also attract B cells, CD4(+) lymphocytes and eosinophils. The chain is C-C motif chemokine 6 (Ccl6) from Mus musculus (Mouse).